We begin with the raw amino-acid sequence, 68 residues long: Conotoxin Em11.5 (68 aa).

The signal sequence occupies residues 1-26 (MMFRLTSVGCFLLVIACLNLFQVVLT). 4 disulfide bridges follow: Cys-29–Cys-43, Cys-36–Cys-48, Cys-42–Cys-52, and Cys-47–Cys-56. Phe-60 is modified (phenylalanine amide). The propeptide occupies 64-68 (ATFQE).

Belongs to the conotoxin I2 superfamily. As to expression, expressed by the venom duct.

It localises to the secreted. This Conus emaciatus (False virgin cone) protein is Conotoxin Em11.5.